Here is a 654-residue protein sequence, read N- to C-terminus: Acetyl-coenzyme A synthetase (654 aa).

Residues 193–196 (RRGK) and Thr313 contribute to the CoA site. Residues 389 to 391 (GEP), 413 to 418 (DTWWQT), Asp506, and Arg521 each bind ATP. Ser529 contributes to the CoA binding site. Arg532 contacts ATP. Residues His545 and Val548 each coordinate Mg(2+). Lys619 carries the post-translational modification N6-acetyllysine.

The protein belongs to the ATP-dependent AMP-binding enzyme family. The cofactor is Mg(2+). Acetylated. Deacetylation by the SIR2-homolog deacetylase activates the enzyme.

It catalyses the reaction acetate + ATP + CoA = acetyl-CoA + AMP + diphosphate. In terms of biological role, catalyzes the conversion of acetate into acetyl-CoA (AcCoA), an essential intermediate at the junction of anabolic and catabolic pathways. AcsA undergoes a two-step reaction. In the first half reaction, AcsA combines acetate with ATP to form acetyl-adenylate (AcAMP) intermediate. In the second half reaction, it can then transfer the acetyl group from AcAMP to the sulfhydryl group of CoA, forming the product AcCoA. The sequence is that of Acetyl-coenzyme A synthetase from Wolinella succinogenes (strain ATCC 29543 / DSM 1740 / CCUG 13145 / JCM 31913 / LMG 7466 / NCTC 11488 / FDC 602W) (Vibrio succinogenes).